Reading from the N-terminus, the 603-residue chain is Rab proteins geranylgeranyltransferase component A (603 aa).

At S470 the chain carries Phosphoserine.

It belongs to the Rab GDI family.

Functionally, substrate-binding subunit (component A) of the Rab geranylgeranyltransferase (GGTase) complex. Binds unprenylated Rab proteins and presents the substrate peptide to the catalytic component B. The component A is thought to be regenerated by transferring its prenylated Rab back to the donor membrane. In Saccharomyces cerevisiae (strain ATCC 204508 / S288c) (Baker's yeast), this protein is Rab proteins geranylgeranyltransferase component A (MRS6).